We begin with the raw amino-acid sequence, 613 residues long: MFNMNVDESASGALGSSAIPVHPTPASVRLFEILQGKYAYVQGQTIYANLRNPGVFSRQVFTHLFKRAISHCTYDDVLHDWNKFEACIQKRWPSDDSCASRFRESTFESWSTTMKLTVRDLLTTNIYRVLHSRSVLSYERYVDWICATGMVPAVKKPITQELHSKIKSLRDRCVCRELGHERTIRSIGTELYEATKEIIESLNSTFIPQFTEVTIEYLPRSDEYVAYYCGRRIRLHVLFPPAIFAGTVTFDSPVQRLYQNIFMCYRTLEHAKICQLLNTAPLKAIVGHGGRDMYKDILAHLEQNSQRKDPKKELLNLLVKLSENKTISGVTDVVEEFITDASNNLVDRNRLFGQPGETAAQGLKKKVSNTVVKCLTDQINEQFDQINGLEKERELYLKKIRSMESQLQASLGPGGNNPAASAPAAVAAEAASVDILTGSTASAIEKLFNSPSASLGARVSGHNESILNSFVSQYIPPSREMTKDLTELWESELFNTFKLTPVVDNQGQRLYVRYSSDTISILLGPFTYLVAELSPVELVTDVYATLGIVEIIDELYRSSRLAIYIEDLGRKYCPASATGGDHGIRQAPSARGDTEPDHAKSKPARDPPPGAGS.

Residues 577–613 (ATGGDHGIRQAPSARGDTEPDHAKSKPARDPPPGAGS) are disordered. Basic and acidic residues predominate over residues 592 to 605 (GDTEPDHAKSKPAR).

Belongs to the herpesviridae portal protein family. In terms of assembly, homododecamerizes. Interacts with terminase subunits TRM1 and TRM3.

The protein resides in the virion. It localises to the host nucleus. It is found in the host cytoplasm. Its function is as follows. Forms a portal in the viral capsid through which viral DNA is translocated during DNA packaging. Assembles as a dodecamer at a single fivefold axe of the T=16 icosahedric capsid. Binds to the molecular motor that translocates the viral DNA, termed terminase. The polypeptide is Portal protein (Epstein-Barr virus (strain B95-8) (HHV-4)).